Consider the following 256-residue polypeptide: Floral homeotic protein APETALA 1 (256 aa).

Residues 1–61 (MGRGRVQLKR…GKLFEYSTDS (61 aa)) enclose the MADS-box domain. The K-box domain maps to 88–178 (NTNWSMEYNR…SKQIKEREKI (91 aa)). Residues 88 to 185 (NTNWSMEYNR…EKILRAQQEQ (98 aa)) are a coiled coil.

As to quaternary structure, homodimer capable of binding to CArG-box sequences. Heterodimer with SEP3, AP1 and SVP. Binds AP3/PI to form a ternary complex. Interacts with the SEU-LUG corepressor complex when complexed to AGL24 or SVP. Interacts with AGL15 and AGL16. Interacts with TT16/AGL32. Expressed in young flower primordia, later becomes localized to sepals and petals.

It localises to the nucleus. Transcription factor that promotes early floral meristem identity in synergy with LEAFY. Is required subsequently for the transition of an inflorescence meristem into a floral meristem. Is indispensable for normal development of sepals and petals in flowers. Positively regulates the B class homeotic proteins APETALA3 and PISTILLATA with the cooperation of LEAFY and UFO. Interacts with SEPALLATA3 or AP3/PI heterodimer to form complexes that could be involved in genes regulation during floral meristem development. Positively regulates AGAMOUS in cooperation with LEAFY. Displays a redundant function with CAULIFLOWER in the up-regulation of LEAFY. Together with AGL24 and SVP, controls the identity of the floral meristem and regulates expression of class B, C and E genes. Represses flowering time genes AGL24, SVP and SOC1 in emerging floral meristems. This is Floral homeotic protein APETALA 1 (AP1) from Arabidopsis thaliana (Mouse-ear cress).